Here is a 449-residue protein sequence, read N- to C-terminus: Glucose-6-phosphate isomerase (449 aa).

Glutamate 291 (proton donor) is an active-site residue. Catalysis depends on residues histidine 312 and lysine 426.

It belongs to the GPI family.

Its subcellular location is the cytoplasm. It catalyses the reaction alpha-D-glucose 6-phosphate = beta-D-fructose 6-phosphate. It participates in carbohydrate biosynthesis; gluconeogenesis. Its pathway is carbohydrate degradation; glycolysis; D-glyceraldehyde 3-phosphate and glycerone phosphate from D-glucose: step 2/4. Catalyzes the reversible isomerization of glucose-6-phosphate to fructose-6-phosphate. This chain is Glucose-6-phosphate isomerase, found in Streptococcus pneumoniae (strain ATCC BAA-255 / R6).